A 1350-amino-acid polypeptide reads, in one-letter code: MTRLMCLLMSLSIFVRGFDSQFVDMSPASNASECLESQVDAAAFSKLVWPYPIDPAKVDGIIYPLGRTYSNITLEYTGLFPLQGDLGMQYLYSVSHAVGNDGDPTKAYISNYSLLVNDFDNGFVVRIGAAANSTGTIVISPSVNTKIKKAYPAFILGSSLTNTSAGKPLYANYSLTIIPDGCGTVLHAFYCILKPRTGNRCPSGSDYNAYFIYETIHSDCQSTINRNASLNSFKSFFDLVNCTFFNSWDITADETKEWFGITQDTQGVHLHSSRKGDLYGGNMFRFATLPVYEGIKYYTVIPRSFRSKANKREAWAAFYVYKLHQLTYLLDFSVDGYIRRAIDCGHDDLSQLHCSYTSFEVDTGVYSVSSYEASATGTFIEQPNVTECDFSPMLTGVAPQVYNFKRLVFSNCNYNLTKLLSLFAVDEFSCNGISPDAIARGCYSTLTVDYFAYPLSMKSYIRPGSAGNIPLYNYKQSFANPTCRVMASVPDNVTITKPGAYGYISKCSRLTGVNQDIETPLYINPGEYSICRDFAPLGFSEDGQVFKRTLTQFEGGGLLIGVGTRVPMTANLEMGFVISVQYGTGTDSVCPMLDLGDSLTITNRLGKCVDYSLYGVTGRGVFQNCTAVGVKQQRFVYDSFDNLVGYYSDDGNYYCVRPCVSVPVSVIYDKSTNLHATLFGSVACEHVTTMMSQFSRLTQSNLRRRDSNTPLQTAVGCVIGLSNNSLVVSDCKLPLGQSLCAVPPVSMFRSYSASQFQLAVLNYTSPIVVTPINSSGFTAAIPTNFSFSLTQEYIETSIQKVTVDCKQYVCNGFTRCEKLLVEYGQFCSKINQALHGANLRQDESVYSLYSNIKTTSTQTLEYGLNGDFNLTLLQVPQIGGSSYRSAIEDLLFDKVTIADPGYMQGYDDCMKQGPQSARDLICAQYVSGYKVLPPLYDPNMEAAYTSSLLGSIAGAGWTAGLSSFAAIPFAQSMFYRLNGVGITQQVLSENQKLIANKFNQALGAMQTGFTTSNLAFSKVQDAVNANAQALSKLASELSNTFGAISSSISDILARLDTVEQDAQIDRLINGRLTSLNAFVSQQLVRSETAARSAQLASDKVNECVKSQSKRNGFCGSGTHIVSFVVNAPNGFYFFHVGYVPTNYTNVTAAYGLCNHNNPPLCIAPIDGYFITNQTTTYSVDTEWYYTGSSFFKPEPITQANSRYVSSDVKFEKLENNLPPPLLENSTDVDFKDELEEFFKNVTSHGPNFAEISKINTTLLDLSDEMAILQEVVKQLNDSYIDLKELGNYTYYNKWPWYIWLGFIAGLVALLLCVFFLLCCTGCGTSCLGKMKCKNCCDSYEEYDVEKIHVH.

An N-terminal signal peptide occupies residues 1–12 (MTRLMCLLMSLS). The Extracellular segment spans residues 13–1295 (IFVRGFDSQF…GNYTYYNKWP (1283 aa)). The region spanning 21–356 (QFVDMSPASN…DDLSQLHCSY (336 aa)) is the BetaCoV S1-NTD domain. N-linked (GlcNAc...) asparagine; by host glycans are attached at residues Asn30, Asn71, Asn111, Asn132, Asn162, Asn172, Asn227, and Asn241. 2 cysteine pairs are disulfide-bonded: Cys191/Cys242 and Cys344/Cys354. N-linked (GlcNAc...) asparagine; by host glycosylation is present at Asn384. Residues 386 to 592 (TECDFSPMLT…GTGTDSVCPM (207 aa)) form the BetaCoV S1-CTD domain. A disulfide bridge links Cys388 with Cys412. N-linked (GlcNAc...) asparagine; by host glycosylation occurs at Asn415. 2 cysteine pairs are disulfide-bonded: Cys430–Cys483 and Cys442–Cys590. N-linked (GlcNAc...) asparagine; by host glycosylation is found at Asn492, Asn624, Asn723, Asn762, Asn773, Asn784, and Asn869. Fusion peptide regions lie at residues 885-906 (SAIE…MQGY) and 904-926 (QGYD…AQYV). The cysteines at positions 909 and 922 are disulfide-linked. The heptad repeat 1 stretch occupies residues 991–1041 (QKLIANKFNQALGAMQTGFTTSNLAFSKVQDAVNANAQALSKLASELSNTF). Residues 1020–1064 (QDAVNANAQALSKLASELSNTFGAISSSISDILARLDTVEQDAQI) are a coiled coil. N-linked (GlcNAc...) asparagine; by host glycans are attached at residues Asn1142, Asn1145, Asn1172, Asn1224, Asn1240, Asn1255, Asn1276, and Asn1287. Residues 1245–1284 (GPNFAEISKINTTLLDLSDEMAILQEVVKQLNDSYIDLKE) are heptad repeat 2. A coiled-coil region spans residues 1257-1285 (TLLDLSDEMAILQEVVKQLNDSYIDLKEL). A helical membrane pass occupies residues 1296–1316 (WYIWLGFIAGLVALLLCVFFL). Topologically, residues 1317 to 1350 (LCCTGCGTSCLGKMKCKNCCDSYEEYDVEKIHVH) are cytoplasmic. A KxHxx motif is present at residues 1348 to 1350 (HVH).

The protein belongs to the betacoronaviruses spike protein family. As to quaternary structure, homotrimer; each monomer consists of a S1 and a S2 subunit. The resulting peplomers protrude from the virus surface as spikes. Post-translationally, specific enzymatic cleavages in vivo yield mature proteins. Specific enzymatic cleavages in vivo yield mature proteins. The precursor is processed into S1 and S2 by host cell furin or another cellular protease to yield the mature S1 and S2 proteins. Additionally, a second cleavage leads to the release of a fusion peptide after viral attachment to host cell receptor. In terms of processing, the cytoplasmic Cys-rich domain is palmitoylated. Spike glycoprotein is digested within host endosomes.

Its subcellular location is the virion membrane. It localises to the host endoplasmic reticulum-Golgi intermediate compartment membrane. It is found in the host cell membrane. Attaches the virion to the cell membrane by interacting with host receptor, initiating the infection. Functionally, mediates fusion of the virion and cellular membranes by acting as a class I viral fusion protein. Under the current model, the protein has at least three conformational states: pre-fusion native state, pre-hairpin intermediate state, and post-fusion hairpin state. During viral and target cell membrane fusion, the coiled coil regions (heptad repeats) assume a trimer-of-hairpins structure, positioning the fusion peptide in close proximity to the C-terminal region of the ectodomain. The formation of this structure appears to drive apposition and subsequent fusion of viral and target cell membranes. In terms of biological role, acts as a viral fusion peptide which is unmasked following S2 cleavage occurring upon virus endocytosis. This chain is Spike glycoprotein, found in Tylonycteris pachypus (Lesser bamboo bat).